The chain runs to 618 residues: Leucine aminopeptidase 2 (618 aa).

Residues 140–142 (QCQ) and 272–277 (PYGGME) contribute to the a peptide site. Residue His-301 participates in Zn(2+) binding. Glu-302 serves as the catalytic Proton acceptor. His-305 and Glu-324 together coordinate Zn(2+). The Proton donor role is filled by Tyr-389.

The protein belongs to the peptidase M1 family. Requires Zn(2+) as cofactor.

Its subcellular location is the cytoplasm. The protein localises to the nucleus. It catalyses the reaction an epoxide + H2O = an ethanediol. Its function is as follows. Aminopeptidase that preferentially cleaves di- and tripeptides. Also has low epoxide hydrolase activity (in vitro). Can hydrolyze the epoxide leukotriene LTA(4) but it forms preferentially 5,6-dihydroxy-7,9,11,14-eicosatetraenoic acid rather than the cytokine leukotriene B(4) as the product compared to the homologous mammalian enzyme (in vitro). The sequence is that of Leucine aminopeptidase 2 from Emericella nidulans (strain FGSC A4 / ATCC 38163 / CBS 112.46 / NRRL 194 / M139) (Aspergillus nidulans).